Reading from the N-terminus, the 347-residue chain is MTVPARGFLLLRGRLGRVPALGRSTAPPVRAPGGPRSAFRGFRSSGVRHEAVIISGTEMAKHIQKEIKQGVESWISLGNRRPHLSIILVGDNPASHTYVRNKIRAASAVGICSELILKPKDVSQEELLDITDQLNMDPRVSGILVQLPLPDHVDERMICNGIAPEKDVDGFHIINIGRLCLDQHSLIPATASAVWEIITRTGIQTFGKNVVVAGRSKNVGMPIAMLLHTDGEHERPGGDATVTIAHRYTPKEQLKTHTQLADVIIVAAGIPKLITSDMVKEGAAVIDVGINYVHDPVTGKTKLVGDVDFEAVKKKAGFITPVPGGVGPMTVAMLLKNTLLAAKKIIY.

Residues 98 to 102 (YVRNK) and 145 to 147 (VQL) contribute to the substrate site. NAD(+) contacts are provided by residues 214–216 (GRS) and Arg247. Residue 323 to 327 (PGGVG) coordinates substrate.

It belongs to the tetrahydrofolate dehydrogenase/cyclohydrolase family. The cofactor is Mg(2+).

It localises to the mitochondrion inner membrane. It carries out the reaction (6R)-5,10-methylene-5,6,7,8-tetrahydrofolate + NAD(+) = (6R)-5,10-methenyltetrahydrofolate + NADH. The enzyme catalyses (6R)-5,10-methenyltetrahydrofolate + H2O = (6R)-10-formyltetrahydrofolate + H(+). It catalyses the reaction (6R)-5,10-methylene-5,6,7,8-tetrahydrofolate + NADP(+) = (6R)-5,10-methenyltetrahydrofolate + NADPH. It participates in one-carbon metabolism; tetrahydrofolate interconversion. Functionally, bifunctional mitochondrial folate-interconverting enzyme that has both NAD/NADP-dependent methylenetetrahydrofolate dehydrogenase and methenyltetrahydrofolate cyclohydrolase activities. The sequence is that of Bifunctional methylenetetrahydrofolate dehydrogenase/cyclohydrolase 2, mitochondrial from Callithrix jacchus (White-tufted-ear marmoset).